The sequence spans 611 residues: Chaperone protein DnaK (611 aa).

T172 carries the post-translational modification Phosphothreonine; by autocatalysis. Residues 575–611 (AAQAAQAQQDGGNESADKQDDNVVDADYEEVNDDDKK) form a disordered region. Acidic residues predominate over residues 596-611 (NVVDADYEEVNDDDKK).

The protein belongs to the heat shock protein 70 family.

In terms of biological role, acts as a chaperone. This Shouchella clausii (strain KSM-K16) (Alkalihalobacillus clausii) protein is Chaperone protein DnaK.